Here is a 79-residue protein sequence, read N- to C-terminus: MSDIEARVKKIIAEQLGVEESQVTNEKAFVADLGADSLDTVELVMALEDEFGIEIPDEDAEKITTVQNAIDYANTHQKA.

Positions 2 to 77 constitute a Carrier domain; the sequence is SDIEARVKKI…NAIDYANTHQ (76 aa). Ser37 carries the post-translational modification O-(pantetheine 4'-phosphoryl)serine.

It belongs to the acyl carrier protein (ACP) family. Post-translationally, 4'-phosphopantetheine is transferred from CoA to a specific serine of apo-ACP by AcpS. This modification is essential for activity because fatty acids are bound in thioester linkage to the sulfhydryl of the prosthetic group.

It localises to the cytoplasm. Its pathway is lipid metabolism; fatty acid biosynthesis. Functionally, carrier of the growing fatty acid chain in fatty acid biosynthesis. The protein is Acyl carrier protein of Paracidovorax citrulli (strain AAC00-1) (Acidovorax citrulli).